A 181-amino-acid polypeptide reads, in one-letter code: MSSLSVYHVSSPDMPNKVLTHLEDIASTLAEHGVAFDRWEAATPITPGASQEEVISAYRTQIDTLMTERGYVTVDVISLNSDHPQKAELRARFLEEHRHGEDEVRFFVAGRGLFTLHIDDYVYAVLCEKNDLISVPAGTRHWFDMGENPHFVAIRLFNNPEGWVANFTGEDIAGRFPRLED.

Fe(2+) contacts are provided by His97, His99, Glu103, and His141. Ni(2+) is bound by residues His97, His99, Glu103, and His141.

The protein belongs to the acireductone dioxygenase (ARD) family. As to quaternary structure, monomer. It depends on Fe(2+) as a cofactor. Ni(2+) serves as cofactor.

It carries out the reaction 1,2-dihydroxy-5-(methylsulfanyl)pent-1-en-3-one + O2 = 3-(methylsulfanyl)propanoate + CO + formate + 2 H(+). The enzyme catalyses 1,2-dihydroxy-5-(methylsulfanyl)pent-1-en-3-one + O2 = 4-methylsulfanyl-2-oxobutanoate + formate + 2 H(+). The protein operates within amino-acid biosynthesis; L-methionine biosynthesis via salvage pathway; L-methionine from S-methyl-5-thio-alpha-D-ribose 1-phosphate: step 5/6. In terms of biological role, catalyzes 2 different reactions between oxygen and the acireductone 1,2-dihydroxy-3-keto-5-methylthiopentene (DHK-MTPene) depending upon the metal bound in the active site. Fe-containing acireductone dioxygenase (Fe-ARD) produces formate and 2-keto-4-methylthiobutyrate (KMTB), the alpha-ketoacid precursor of methionine in the methionine recycle pathway. Ni-containing acireductone dioxygenase (Ni-ARD) produces methylthiopropionate, carbon monoxide and formate, and does not lie on the methionine recycle pathway. The polypeptide is Acireductone dioxygenase (Pseudomonas syringae pv. syringae (strain B728a)).